Consider the following 397-residue polypeptide: Tryptophan synthase beta chain (397 aa).

Position 91 is an N6-(pyridoxal phosphate)lysine (Lys91).

It belongs to the TrpB family. Tetramer of two alpha and two beta chains. Requires pyridoxal 5'-phosphate as cofactor.

The enzyme catalyses (1S,2R)-1-C-(indol-3-yl)glycerol 3-phosphate + L-serine = D-glyceraldehyde 3-phosphate + L-tryptophan + H2O. It participates in amino-acid biosynthesis; L-tryptophan biosynthesis; L-tryptophan from chorismate: step 5/5. The beta subunit is responsible for the synthesis of L-tryptophan from indole and L-serine. The polypeptide is Tryptophan synthase beta chain (Bacillus cereus (strain ZK / E33L)).